The sequence spans 299 residues: Oxygen-dependent coproporphyrinogen-III oxidase (299 aa).

Serine 92 is a binding site for substrate. Histidine 96 and histidine 106 together coordinate a divalent metal cation. Histidine 106 serves as the catalytic Proton donor. Asparagine 108–arginine 110 contacts substrate. A divalent metal cation-binding residues include histidine 145 and histidine 175. Residues tyrosine 240–glutamate 275 are important for dimerization. Substrate is bound at residue glycine 258–arginine 260.

The protein belongs to the aerobic coproporphyrinogen-III oxidase family. As to quaternary structure, homodimer. A divalent metal cation is required as a cofactor.

The protein localises to the cytoplasm. It catalyses the reaction coproporphyrinogen III + O2 + 2 H(+) = protoporphyrinogen IX + 2 CO2 + 2 H2O. The protein operates within porphyrin-containing compound metabolism; protoporphyrin-IX biosynthesis; protoporphyrinogen-IX from coproporphyrinogen-III (O2 route): step 1/1. In terms of biological role, involved in the heme biosynthesis. Catalyzes the aerobic oxidative decarboxylation of propionate groups of rings A and B of coproporphyrinogen-III to yield the vinyl groups in protoporphyrinogen-IX. The chain is Oxygen-dependent coproporphyrinogen-III oxidase from Salmonella schwarzengrund (strain CVM19633).